We begin with the raw amino-acid sequence, 606 residues long: Acetylcholinesterase (606 aa).

A signal peptide spans 1 to 28 (MPSCQPGKMPAPWPWWLQLLLCIPSCVA). An intrachain disulfide couples Cys-98 to Cys-125. The active-site Acyl-ester intermediate is the Ser-231. A disulfide bond links Cys-285 and Cys-296. Residue Asn-289 is glycosylated (N-linked (GlcNAc...) asparagine). The Charge relay system role is filled by Glu-358. A glycan (N-linked (GlcNAc...) asparagine) is linked at Asn-374. An intrachain disulfide couples Cys-433 to Cys-552. His-471 serves as the catalytic Charge relay system. The N-linked (GlcNAc...) asparagine glycan is linked to Asn-484.

This sequence belongs to the type-B carboxylesterase/lipase family. Isoform S is monomeric. Isoform T can form oligomers, including collagen-tailed forms. In terms of processing, the N-terminus is blocked. In terms of tissue distribution, liver and muscle contain both isoform T and isoform S. Venom gland predominantly contains isoform S.

It is found in the synapse. Its subcellular location is the secreted. It localises to the cell membrane. It carries out the reaction acetylcholine + H2O = choline + acetate + H(+). Inhibited by active site inhibitors: edrophonium, trimethyl-(m-acetamidopheny1)-ammonium iodide, and trimethyl-(p-acetarnidopheny1)-ammonium iodide. Inhibited by both active and peripheral site inhibitors: decamethonium, and BW284c51. Inhibited by peripheral site inhibitors: snake acetylcholinesterase fasciculin-2, propidium, gallamine, D-tubocurarine, and tacrine. Also inhibited by antibodies Elec410 and Fab410. Its function is as follows. In muscle, it terminates signal transduction at the neuromuscular junction by rapid hydrolysis of the acetylcholine released into the synaptic cleft. In liver, its function is unclear: it could serve as a safeguard against any diffusion of acetylcholine from synapses into the circulation. In venom, its toxic role is unclear: it could result in less musculatory control by rapidly hydrolyzing acetylcholine, or that it works synergistically with alkaline phosphatase (ALP) in paralyzing prey through hypotension. The polypeptide is Acetylcholinesterase (ACHE) (Bungarus fasciatus (Banded krait)).